We begin with the raw amino-acid sequence, 92 residues long: Small ribosomal subunit protein uS19c (92 aa).

The protein belongs to the universal ribosomal protein uS19 family. Component of the chloroplast small ribosomal subunit (SSU). Mature 70S chloroplast ribosomes of higher plants consist of a small (30S) and a large (50S) subunit. The 30S small subunit contains 1 molecule of ribosomal RNA (16S rRNA) and 24 different proteins. The 50S large subunit contains 3 rRNA molecules (23S, 5S and 4.5S rRNA) and 33 different proteins. uS19c binds directly to 16S ribosomal RNA.

Its subcellular location is the plastid. It localises to the chloroplast. Functionally, component of the chloroplast ribosome (chloro-ribosome), a dedicated translation machinery responsible for the synthesis of chloroplast genome-encoded proteins, including proteins of the transcription and translation machinery and components of the photosynthetic apparatus. The protein is Small ribosomal subunit protein uS19c (rps19) of Spinacia oleracea (Spinach).